The following is a 163-amino-acid chain: Large ribosomal subunit protein uL11 (163 aa).

The tract at residues Met1–Gly25 is disordered.

It belongs to the universal ribosomal protein uL11 family. Part of the ribosomal stalk of the 50S ribosomal subunit. Interacts with L10 and the large rRNA to form the base of the stalk. L10 forms an elongated spine to which L12 dimers bind in a sequential fashion forming a multimeric L10(L12)X complex.

Its function is as follows. Forms part of the ribosomal stalk which helps the ribosome interact with GTP-bound translation factors. The protein is Large ribosomal subunit protein uL11 of Natronomonas pharaonis (strain ATCC 35678 / DSM 2160 / CIP 103997 / JCM 8858 / NBRC 14720 / NCIMB 2260 / Gabara) (Halobacterium pharaonis).